Consider the following 513-residue polypeptide: ATP synthase subunit alpha (513 aa).

172–179 is a binding site for ATP; that stretch reads GDRQTGKT.

The protein belongs to the ATPase alpha/beta chains family. F-type ATPases have 2 components, CF(1) - the catalytic core - and CF(0) - the membrane proton channel. CF(1) has five subunits: alpha(3), beta(3), gamma(1), delta(1), epsilon(1). CF(0) has three main subunits: a(1), b(2) and c(9-12). The alpha and beta chains form an alternating ring which encloses part of the gamma chain. CF(1) is attached to CF(0) by a central stalk formed by the gamma and epsilon chains, while a peripheral stalk is formed by the delta and b chains.

The protein localises to the cell inner membrane. It catalyses the reaction ATP + H2O + 4 H(+)(in) = ADP + phosphate + 5 H(+)(out). Produces ATP from ADP in the presence of a proton gradient across the membrane. The alpha chain is a regulatory subunit. The sequence is that of ATP synthase subunit alpha from Gluconacetobacter diazotrophicus (strain ATCC 49037 / DSM 5601 / CCUG 37298 / CIP 103539 / LMG 7603 / PAl5).